We begin with the raw amino-acid sequence, 341 residues long: MSSECARSDVHNVLTSDSMKFNHCFIISIIIISFFTTTKSVRVLLKQNLLPTCTRNLLFSAIINGIIHQCVTAVIRLRAFYHAIVYASDPCAILFQSSQCFFDGNLYYYTNLFSSFCCFSLFLDRLFSFKPRSSYHNHQTLASIVLILSQIVLPIGPLYWVFYDAFYTSYVLMCTYPPPMSVMKLHEVNNIRICVLIVLLFFAIFLYIHNKIREKRMVHNVYNINSRYKSYENYLATKSVCIVIFSQILCVGPTSSITSVFIRFRDSIPLEWFHLIISYLTGLTYSNFLLPLIILYQDKQIAKKRRIMIQRLQNKNETSFDHFDTLKSLWGKKTGNQETLF.

Transmembrane regions (helical) follow at residues F25 to L45, L57 to L77, Y107 to F129, A142 to F162, V188 to I208, I242 to I262, and L275 to L295.

This sequence belongs to the nematode receptor-like protein sra family.

The protein resides in the membrane. The sequence is that of Serpentine receptor class alpha-28 (sra-28) from Caenorhabditis elegans.